The following is a 382-amino-acid chain: Ribosomal RNA large subunit methyltransferase G (382 aa).

The protein belongs to the methyltransferase superfamily. RlmG family.

The protein localises to the cytoplasm. The enzyme catalyses guanosine(1835) in 23S rRNA + S-adenosyl-L-methionine = N(2)-methylguanosine(1835) in 23S rRNA + S-adenosyl-L-homocysteine + H(+). In terms of biological role, specifically methylates the guanine in position 1835 (m2G1835) of 23S rRNA. This chain is Ribosomal RNA large subunit methyltransferase G, found in Psychromonas ingrahamii (strain DSM 17664 / CCUG 51855 / 37).